Consider the following 99-residue polypeptide: uncharacterized protein (99 aa).

This sequence belongs to the ycf15 family.

The protein resides in the plastid. It localises to the chloroplast. This is an uncharacterized protein from Saccharum hybrid (Sugarcane).